A 261-amino-acid chain; its full sequence is Small ribosomal subunit protein eS1A (261 aa).

A compositionally biased stretch (basic residues) spans 1-18 (MTLGKNKRISKGGKRGKK). The interval 1-23 (MTLGKNKRISKGGKRGKKKTQET) is disordered.

It belongs to the eukaryotic ribosomal protein eS1 family. Component of the small ribosomal subunit. Mature ribosomes consist of a small (40S) and a large (60S) subunit. The 40S subunit contains about 33 different proteins and 1 molecule of RNA (18S). The 60S subunit contains about 49 different proteins and 3 molecules of RNA (25S, 5.8S and 5S).

It localises to the cytoplasm. The sequence is that of Small ribosomal subunit protein eS1A from Trypanosoma cruzi (strain CL Brener).